The primary structure comprises 718 residues: SANT and BTB domain regulator of class switch recombination (718 aa).

Positions 21 to 59 (DMILYPLIGIPQTINWETIARLVPGLTPKECAKRFDELK) constitute an SANT domain. Over residues 118–134 (ASTRNCSSESENCTTHN) the composition is skewed to polar residues. The segment at 118-142 (ASTRNCSSESENCTTHNGGEMTEES) is disordered. The region spanning 147-255 (MVIHVCDEAK…QCIQYCHKNM (109 aa)) is the BTB domain. Positions 555–576 (SEEEEYTTGSEVTEDEVGDEEE) are enriched in acidic residues. 2 disordered regions span residues 555-622 (SEEE…SPFV) and 692-718 (SVPV…GRPA). Basic residues predominate over residues 580–595 (KQRKKEKPKKFTRQPK). Residues 604-615 (QRKEKALEKSAS) are compositionally biased toward basic and acidic residues.

The protein belongs to the KIAA1841 family. In terms of assembly, homodimer. Interacts (via the BTB domain) with HDAC1 and NCOR2.

In terms of biological role, negatively regulates class switch recombination or isotype switching in splenic B-cells. The sequence is that of SANT and BTB domain regulator of class switch recombination from Homo sapiens (Human).